The sequence spans 243 residues: Ubiquinone/menaquinone biosynthesis C-methyltransferase UbiE (243 aa).

S-adenosyl-L-methionine-binding positions include Thr-69, Asp-90, and 116-117 (DA).

It belongs to the class I-like SAM-binding methyltransferase superfamily. MenG/UbiE family.

The catalysed reaction is a 2-demethylmenaquinol + S-adenosyl-L-methionine = a menaquinol + S-adenosyl-L-homocysteine + H(+). The enzyme catalyses a 2-methoxy-6-(all-trans-polyprenyl)benzene-1,4-diol + S-adenosyl-L-methionine = a 5-methoxy-2-methyl-3-(all-trans-polyprenyl)benzene-1,4-diol + S-adenosyl-L-homocysteine + H(+). It functions in the pathway quinol/quinone metabolism; menaquinone biosynthesis; menaquinol from 1,4-dihydroxy-2-naphthoate: step 2/2. The protein operates within cofactor biosynthesis; ubiquinone biosynthesis. In terms of biological role, methyltransferase required for the conversion of demethylmenaquinol (DMKH2) to menaquinol (MKH2) and the conversion of 2-polyprenyl-6-methoxy-1,4-benzoquinol (DDMQH2) to 2-polyprenyl-3-methyl-6-methoxy-1,4-benzoquinol (DMQH2). The chain is Ubiquinone/menaquinone biosynthesis C-methyltransferase UbiE from Burkholderia cenocepacia (strain HI2424).